The primary structure comprises 881 residues: MAALSWQGIVAVTFTALAFVVMAADWVGPDITFTVLLAFLTAFDGQIVTVAKAAAGYGNTGLLTVVFLYWVAEGITQTGGLELIMNYVLGRSRSVHWALVRSMFPVMVLSAFLNNTPCVTFMIPILISWGRRCGVPIKKLLIPLSYAAVLGGTCTSIGTSTNLVIVGLQDARYAKSKQVDQAKFQIFDIAPYGVPYALWGFVFILLAQGFLLPGNSSRYAKDLLLAVRVLPSSSVVKKKLKDSGLLQQNGFDVTAIYRNGQLIKISDPSIVLDGGDILYVSGELDVVEFVGEEYGLALVNQEQELAAERPFGSGEEAVFSANGAAPYHKLVQAKLSKTSDLIGRTVREVSWQGRFGLIPVAIQRGNGREDGRLSDVVLAAGDVLLLDTTPFYDEDREDIKTNFDGKLHAVKDGAAKEFVIGVKVKKSAEVVGKTVSAAGLRGIPGLFVLSVDHADGTSVDSSDYLYKIQPDDTIWIAADVAAVGFLSKFPGLELVQQEQVDKTGTSILYRHLVQAAVSHKGPLVGKTVRDVRFRTLYNAAVVAVHRENARIPLKVQDIVLQGGDVLLISCHTNWADEHRHDKSFVLVQPVPDSSPPKRSRMIIGVLLATGMVLTQIIGGLKNKEYIHLWPCAVLTAALMLLTGCMNADQTRKAIMWDVYLTIAAAFGVSAALEGTGVAAKFANAIISIGKGAGGTGAALIAIYIATALLSELLTNNAAGAIMYPIAAIAGDALKITPKDTSVAIMLGASAGFVNPFSYQTNLMVYAAGNYSVREFAIVGAPFQVWLMIVAGFILVYRNQWHQVWIVSWICTAGIVLLPALYFLLPTRIQIKIDGFFERIAAVLNPKAALERRRSLRRQVSHTRTDDSGSSGSPLPAPKIVA.

Transmembrane regions (helical) follow at residues 8–28, 31–51, 61–81, 107–127, 140–160, and 186–206; these read GIVAVTFTALAFVVMAADWVG, ITFTVLLAFLTAFDGQIVTVA, GLLTVVFLYWVAEGITQTGGL, MVLSAFLNNTPCVTFMIPILI, LLIPLSYAAVLGGTCTSIGTS, and IFDIAPYGVPYALWGFVFILL. RCK C-terminal domains lie at 212 to 296, 318 to 402, 407 to 492, and 498 to 584; these read LPGN…EYGL, VFSA…IKTN, LHAV…FPGL, and EQVD…DKSF. Helical transmembrane passes span 601–621, 625–645, 658–678, 684–704, 775–795, and 803–823; these read MIIGVLLATGMVLTQIIGGLK, YIHLWPCAVLTAALMLLTGCM, VYLTIAAAFGVSAALEGTGVA, AIISIGKGAGGTGAALIAIYI, FAIVGAPFQVWLMIVAGFILV, and VWIVSWICTAGIVLLPALYFL. A disordered region spans residues 854–881; it reads SLRRQVSHTRTDDSGSSGSPLPAPKIVA.

Belongs to the divalent anion:Na+ symporter (DASS) superfamily. Na+/sulfate symporter (TC 2.A.47.4) family.

It localises to the cell membrane. Its function is as follows. Na(+)/sulfate cotransporter with a probable high-affinity for sulfate and a proteasome dependent turnover. In Chlamydomonas reinhardtii (Chlamydomonas smithii), this protein is Sodium/sulfate cotransporter 1 (SLT1).